The primary structure comprises 442 residues: MTPKEQSPTTLLISSRKDPAGSLIHEELYSFLEDDKRAHSHIRHWHAEERLIYLDGPSLPHDADRILFLSRHASERPRPVLTVHVTGNFGSADYGGRPNTLTPAATGLMHALINRLIIHAPEGYEVMYEATHHGPTDIPLPSCFIELGSTEKEWNDRIAARAVAQAVLDALLMDTSSVIPLAGFGGTHYAQRQTEITKLTRGGFGHIMPTRDIPHLTDALFQDIISSTGAFAIYIDGKSMSGKEERMITGLADKHTIPILGQGDLMRLFDLPFSEYMSIRNLAESLIPGSSIVLHTILEMPAPVSLTIPGELVDEVMKVAAEEFISALDSFPIVHMTGRGKACHPVFITDAAFSGRISDELIHLCVTLLQDRYTCSFEGDSLIIKKLRFDPKKAKNLGIPSGPLYSELMAGKPVEVGDSVIYPEMVMTETEKRIHIPQRQAR.

Belongs to the DtdA deacylase family. In terms of assembly, monomer. Zn(2+) is required as a cofactor.

It catalyses the reaction a D-aminoacyl-tRNA + H2O = a tRNA + a D-alpha-amino acid + H(+). It carries out the reaction glycyl-tRNA(Ala) + H2O = tRNA(Ala) + glycine + H(+). D-aminoacyl-tRNA deacylase with broad substrate specificity. By recycling D-aminoacyl-tRNA to D-amino acids and free tRNA molecules, this enzyme counteracts the toxicity associated with the formation of D-aminoacyl-tRNA entities in vivo. In Methanospirillum hungatei JF-1 (strain ATCC 27890 / DSM 864 / NBRC 100397 / JF-1), this protein is D-aminoacyl-tRNA deacylase.